Reading from the N-terminus, the 504-residue chain is Histidine ammonia-lyase (504 aa).

Positions 142-144 (ASG) form a cross-link, 5-imidazolinone (Ala-Gly). The residue at position 143 (S143) is a 2,3-didehydroalanine (Ser).

The protein belongs to the PAL/histidase family. Contains an active site 4-methylidene-imidazol-5-one (MIO), which is formed autocatalytically by cyclization and dehydration of residues Ala-Ser-Gly.

Its subcellular location is the cytoplasm. The catalysed reaction is L-histidine = trans-urocanate + NH4(+). It participates in amino-acid degradation; L-histidine degradation into L-glutamate; N-formimidoyl-L-glutamate from L-histidine: step 1/3. The polypeptide is Histidine ammonia-lyase (Staphylococcus aureus (strain MSSA476)).